The primary structure comprises 293 residues: Lipoyl synthase (293 aa).

Residues C47, C52, C58, C73, C77, C80, and S285 each coordinate [4Fe-4S] cluster. The Radical SAM core domain occupies 59–274 (WSEGTATFMI…EKIGLELGFR (216 aa)).

The protein belongs to the radical SAM superfamily. Lipoyl synthase family. [4Fe-4S] cluster serves as cofactor.

The protein resides in the cytoplasm. It catalyses the reaction [[Fe-S] cluster scaffold protein carrying a second [4Fe-4S](2+) cluster] + N(6)-octanoyl-L-lysyl-[protein] + 2 oxidized [2Fe-2S]-[ferredoxin] + 2 S-adenosyl-L-methionine + 4 H(+) = [[Fe-S] cluster scaffold protein] + N(6)-[(R)-dihydrolipoyl]-L-lysyl-[protein] + 4 Fe(3+) + 2 hydrogen sulfide + 2 5'-deoxyadenosine + 2 L-methionine + 2 reduced [2Fe-2S]-[ferredoxin]. It participates in protein modification; protein lipoylation via endogenous pathway; protein N(6)-(lipoyl)lysine from octanoyl-[acyl-carrier-protein]: step 2/2. In terms of biological role, catalyzes the radical-mediated insertion of two sulfur atoms into the C-6 and C-8 positions of the octanoyl moiety bound to the lipoyl domains of lipoate-dependent enzymes, thereby converting the octanoylated domains into lipoylated derivatives. This chain is Lipoyl synthase, found in Christiangramia forsetii (strain DSM 17595 / CGMCC 1.15422 / KT0803) (Gramella forsetii).